Here is a 100-residue protein sequence, read N- to C-terminus: Large ribosomal subunit protein bL28 (100 aa).

The interval 1 to 25 (MTRRCDITGKSVLSGNNVSHANNKS) is disordered. Over residues 11–22 (SVLSGNNVSHAN) the composition is skewed to polar residues.

Belongs to the bacterial ribosomal protein bL28 family.

The protein is Large ribosomal subunit protein bL28 of Acidiphilium cryptum (strain JF-5).